We begin with the raw amino-acid sequence, 42 residues long: Photosystem I reaction center subunit IX (42 aa).

Residues 8–28 (YLSTAPVLFTVWLSFTASFII) form a helical membrane-spanning segment.

The protein belongs to the PsaJ family.

It is found in the plastid. The protein resides in the chloroplast thylakoid membrane. May help in the organization of the PsaE and PsaF subunits. In Rhodomonas salina (Cryptomonas salina), this protein is Photosystem I reaction center subunit IX.